Here is a 256-residue protein sequence, read N- to C-terminus: tRNA (guanine-N(7)-)-methyltransferase (256 aa).

The segment covering methionine 1 to threonine 11 has biased composition (polar residues). The tract at residues methionine 1–arginine 35 is disordered. S-adenosyl-L-methionine contacts are provided by glutamate 85, glutamate 110, aspartate 137, and aspartate 160. Aspartate 160 is an active-site residue. Substrate is bound at residue lysine 164. Residues arginine 166 to arginine 171 form an interaction with RNA region. Residues aspartate 196 and threonine 234–glutamate 237 each bind substrate.

The protein belongs to the class I-like SAM-binding methyltransferase superfamily. TrmB family.

It carries out the reaction guanosine(46) in tRNA + S-adenosyl-L-methionine = N(7)-methylguanosine(46) in tRNA + S-adenosyl-L-homocysteine. It functions in the pathway tRNA modification; N(7)-methylguanine-tRNA biosynthesis. Its function is as follows. Catalyzes the formation of N(7)-methylguanine at position 46 (m7G46) in tRNA. The polypeptide is tRNA (guanine-N(7)-)-methyltransferase (Cupriavidus pinatubonensis (strain JMP 134 / LMG 1197) (Cupriavidus necator (strain JMP 134))).